A 235-amino-acid polypeptide reads, in one-letter code: Small ribosomal subunit protein uS2 (235 aa).

It belongs to the universal ribosomal protein uS2 family.

The sequence is that of Small ribosomal subunit protein uS2 from Geobacillus thermodenitrificans (strain NG80-2).